The chain runs to 614 residues: Vitamin B12 transporter BtuB (614 aa).

The signal sequence occupies residues 1-20; it reads MIKKATLLTAFSVTAFSAWA. The TonB box motif lies at 26–33; it reads DTLVVTAN. Residues 38–152 form the TBDR plug domain; that stretch reads PRSAVLAPVT…IGGVVNIITT (115 aa). Residues S85, N92, and 110-111 each bind cyanocob(III)alamin; that span reads VS. One can recognise a TBDR beta-barrel domain in the interval 155 to 614; that stretch reads NPGTELTAGW…EYTLSGSYTF (460 aa). The next 3 beta stranded transmembrane spans lie at 158-165, 169-178, and 184-195; these read TELTAGWG, YQNYDISTQQ, and TRATLIGDYEYT. D199, Q211, D213, and D215 together coordinate Ca(2+). 2 beta stranded membrane-spanning segments follow: residues 217–227 and 232–248; these read FLSKTLYGALE and DRWS…NRTD. Ca(2+)-binding residues include Y249 and D250. A251 serves as a coordination point for cyanocob(III)alamin. D261 lines the Ca(2+) pocket. A run of 14 beta stranded transmembrane segments spans residues 263 to 277, 279 to 296, 309 to 325, 328 to 337, 353 to 369, 371 to 381, 385 to 400, 403 to 417, 434 to 443, 449 to 458, 473 to 490, 494 to 509, 517 to 529, and 535 to 550; these read RKLY…LHFN, ERIQ…KDYN, TLDE…NSVV, HGNVGAGVDW, YDQR…QQLG, FTLEAAARSDD, FGRH…WEFI, YRFI…KAPN, KSKQWEGAFE, VSWRISGYRN, YYNE…TANF, PLTH…ARNA, RRSK…QLDW, and DWGM…YDSD. T309 lines the cyanocob(III)alamin pocket. A cyanocob(III)alamin-binding site is contributed by R517. Y551 serves as a coordination point for cyanocob(III)alamin. A run of 3 beta stranded transmembrane segments spans residues 558 to 572, 585 to 596, and 602 to 614; these read TVKM…LTVA, IANLFDKDYETV, and AGRE…SYTF. Positions 597–614 match the TonB C-terminal box motif; the sequence is YGYQTAGREYTLSGSYTF.

Belongs to the TonB-dependent receptor family. BtuB (TC 1.B.14.3.1) subfamily.

Its subcellular location is the cell outer membrane. Involved in the active translocation of vitamin B12 (cyanocobalamin) across the outer membrane to the periplasmic space. It derives its energy for transport by interacting with the trans-periplasmic membrane protein TonB. This is Vitamin B12 transporter BtuB from Salmonella typhimurium (strain LT2 / SGSC1412 / ATCC 700720).